The chain runs to 160 residues: Cyclic pyranopterin monophosphate synthase (160 aa).

Residues 75–77 (LCH) and 113–114 (ME) contribute to the substrate site. The active site involves aspartate 128.

The protein belongs to the MoaC family. As to quaternary structure, homohexamer; trimer of dimers.

It carries out the reaction (8S)-3',8-cyclo-7,8-dihydroguanosine 5'-triphosphate = cyclic pyranopterin phosphate + diphosphate. It functions in the pathway cofactor biosynthesis; molybdopterin biosynthesis. Catalyzes the conversion of (8S)-3',8-cyclo-7,8-dihydroguanosine 5'-triphosphate to cyclic pyranopterin monophosphate (cPMP). In Haemophilus influenzae (strain PittEE), this protein is Cyclic pyranopterin monophosphate synthase.